The chain runs to 124 residues: Late histone H2B.2.1 (124 aa).

Residues 1–32 (MPAKQTSGKGAKKAGKAKGRPAGASKTRRRKR) are disordered. Residues 10-19 (GAKKAGKAKG) show a composition bias toward basic residues. O-linked (GlcNAc) serine glycosylation is present at serine 111. Lysine 119 is covalently cross-linked (Glycyl lysine isopeptide (Lys-Gly) (interchain with G-Cter in ubiquitin)).

It belongs to the histone H2B family. In terms of assembly, the nucleosome is a histone octamer containing two molecules each of H2A, H2B, H3 and H4 assembled in one H3-H4 heterotetramer and two H2A-H2B heterodimers. The octamer wraps approximately 147 bp of DNA. Post-translationally, monoubiquitination of Lys-119 gives a specific tag for epigenetic transcriptional activation and is also prerequisite for histone H3 'Lys-4' and 'Lys-79' methylation. GlcNAcylation at Ser-111 promotes monoubiquitination of Lys-119. It fluctuates in response to extracellular glucose, and associates with transcribed genes.

The protein localises to the nucleus. It is found in the chromosome. Core component of nucleosome. Nucleosomes wrap and compact DNA into chromatin, limiting DNA accessibility to the cellular machineries which require DNA as a template. Histones thereby play a central role in transcription regulation, DNA repair, DNA replication and chromosomal stability. DNA accessibility is regulated via a complex set of post-translational modifications of histones, also called histone code, and nucleosome remodeling. The polypeptide is Late histone H2B.2.1 (Psammechinus miliaris (Green sea urchin)).